A 398-amino-acid chain; its full sequence is S-adenosylmethionine synthase (398 aa).

His-16 contacts ATP. Residue Asp-18 coordinates Mg(2+). Position 51 (Glu-51) interacts with K(+). L-methionine is bound by residues Glu-64 and Gln-108. The flexible loop stretch occupies residues 108 to 118; sequence QSADIAQGVDA. ATP-binding positions include 176–178, 242–243, Asp-251, 257–258, Ala-274, and Lys-278; these read DSK, KF, and RK. An L-methionine-binding site is contributed by Asp-251. Lys-282 serves as a coordination point for L-methionine.

It belongs to the AdoMet synthase family. In terms of assembly, homotetramer; dimer of dimers. It depends on Mg(2+) as a cofactor. K(+) serves as cofactor.

The protein localises to the cytoplasm. It catalyses the reaction L-methionine + ATP + H2O = S-adenosyl-L-methionine + phosphate + diphosphate. The protein operates within amino-acid biosynthesis; S-adenosyl-L-methionine biosynthesis; S-adenosyl-L-methionine from L-methionine: step 1/1. Its function is as follows. Catalyzes the formation of S-adenosylmethionine (AdoMet) from methionine and ATP. The overall synthetic reaction is composed of two sequential steps, AdoMet formation and the subsequent tripolyphosphate hydrolysis which occurs prior to release of AdoMet from the enzyme. The protein is S-adenosylmethionine synthase of Rhodopseudomonas palustris (strain BisB5).